We begin with the raw amino-acid sequence, 432 residues long: Adenylosuccinate synthetase (432 aa).

GTP contacts are provided by residues 11–17 (GDEGKGK) and 39–41 (GHT). The active-site Proton acceptor is Asp12. Asp12 and Gly39 together coordinate Mg(2+). IMP-binding positions include 12-15 (DEGK), 37-40 (NAGH), Thr134, Arg148, Asn230, Thr245, and Arg309. The active-site Proton donor is the His40. 305–311 (VTTGRKR) is a substrate binding site. Residues Arg311, 337–339 (KLD), and 419–421 (GTG) contribute to the GTP site.

It belongs to the adenylosuccinate synthetase family. In terms of assembly, homodimer. The cofactor is Mg(2+).

It localises to the cytoplasm. The catalysed reaction is IMP + L-aspartate + GTP = N(6)-(1,2-dicarboxyethyl)-AMP + GDP + phosphate + 2 H(+). It functions in the pathway purine metabolism; AMP biosynthesis via de novo pathway; AMP from IMP: step 1/2. Its function is as follows. Plays an important role in the de novo pathway and in the salvage pathway of purine nucleotide biosynthesis. Catalyzes the first committed step in the biosynthesis of AMP from IMP. In Vanderwaltozyma polyspora (strain ATCC 22028 / DSM 70294 / BCRC 21397 / CBS 2163 / NBRC 10782 / NRRL Y-8283 / UCD 57-17) (Kluyveromyces polysporus), this protein is Adenylosuccinate synthetase.